The chain runs to 168 residues: Pheromone-binding protein (168 aa).

Positions 1 to 26 are cleaved as a signal peptide; sequence MNKTTTKMKVAVVAIVVYLAVGNVDS. Cystine bridges form between Cys-45–Cys-80, Cys-76–Cys-134, and Cys-123–Cys-143.

Belongs to the PBP/GOBP family. In terms of assembly, homodimer. As to expression, antenna.

In terms of biological role, this major soluble protein in olfactory sensilla of male moths might serve to solubilize the extremely hydrophobic pheromone molecules and to transport pheromone through the aqueous lymph to receptors located on olfactory cilia. PBP is also found in sensilla from female M.sexta antennae. This chain is Pheromone-binding protein, found in Manduca sexta (Tobacco hawkmoth).